The following is a 265-amino-acid chain: Catechol O-methyltransferase (265 aa).

At 1-2 the chain is on the cytoplasmic side; that stretch reads ML. The helical; Signal-anchor for type II membrane protein transmembrane segment at 3 to 19 threads the bilayer; the sequence is LAAVSLGLLLLAFLLLL. The Extracellular segment spans residues 20–265; that stretch reads RHLGWGLVAI…QGPGSSPVKS (246 aa). S-adenosyl-L-methionine contacts are provided by residues V85, E107, S115, E133, I134, 160–163, S162, and D184; that span reads GASQ. Residue D184 coordinates Mg(2+). Residue K187 participates in substrate binding. Positions 212 and 213 each coordinate Mg(2+). Residues N213 and E242 each contribute to the substrate site. A phosphoserine mark is found at S260, S261, and S265.

The protein belongs to the class I-like SAM-binding methyltransferase superfamily. Cation-dependent O-methyltransferase family. The cofactor is Mg(2+).

Its subcellular location is the cytoplasm. It is found in the cell membrane. The catalysed reaction is a catechol + S-adenosyl-L-methionine = a guaiacol + S-adenosyl-L-homocysteine + H(+). The enzyme catalyses 2-hydroxyestrone + S-adenosyl-L-methionine = 2-hydroxy-3-methoxy-estrone + S-adenosyl-L-homocysteine + H(+). It catalyses the reaction 4-hydroxyestrone + S-adenosyl-L-methionine = 4-methoxyestrone + S-adenosyl-L-homocysteine + H(+). It carries out the reaction 2-hydroxyestrone + S-adenosyl-L-methionine = 2-methoxyestrone + S-adenosyl-L-homocysteine + H(+). The catalysed reaction is 4-hydroxy-17beta-estradiol + S-adenosyl-L-methionine = 4-methoxy-17beta-estradiol + S-adenosyl-L-homocysteine + H(+). The enzyme catalyses 2-hydroxy-17beta-estradiol + S-adenosyl-L-methionine = 2-hydroxy-3-methoxy-17beta-estradiol + S-adenosyl-L-homocysteine + H(+). It catalyses the reaction 2-hydroxy-17beta-estradiol + S-adenosyl-L-methionine = 2-methoxy-17beta-estradiol + S-adenosyl-L-homocysteine + H(+). Functionally, catalyzes the O-methylation, and thereby the inactivation, of catecholamine neurotransmitters and catechol hormones. Also shortens the biological half-lives of certain neuroactive drugs, like L-DOPA, alpha-methyl DOPA and isoproterenol. The polypeptide is Catechol O-methyltransferase (Mus musculus (Mouse)).